Here is a 42-residue protein sequence, read N- to C-terminus: Gastric inhibitory polypeptide (42 aa).

The protein belongs to the glucagon family.

The protein localises to the secreted. Potent stimulator of insulin secretion and relatively poor inhibitor of gastric acid secretion. The polypeptide is Gastric inhibitory polypeptide (GIP) (Bos taurus (Bovine)).